The primary structure comprises 168 residues: Heat shock protein beta-9 (168 aa).

Residues 1-12 (MQRVGSSFSTGQ) show a composition bias toward polar residues. Disordered regions lie at residues 1 to 25 (MQRV…SRCP), 83 to 104 (TGQR…EQSV), and 129 to 168 (LWLR…VKNP). The sHSP domain occupies 38-151 (LPVRLLRDEV…EAQTGQSQKP (114 aa)). The segment covering 86 to 104 (RQHESNDPSRGRYRMEQSV) has biased composition (basic and acidic residues). A compositionally biased stretch (polar residues) spans 158 to 168 (SSLQNESVKNP).

Belongs to the small heat shock protein (HSP20) family. As to expression, testis specific.

It is found in the cytoplasm. It localises to the nucleus. This is Heat shock protein beta-9 (Hspb9) from Mus musculus (Mouse).